Here is a 422-residue protein sequence, read N- to C-terminus: Alcohol dehydrogenase 4 (422 aa).

A mitochondrion-targeting transit peptide spans 1–29 (MSILRSPFRLIRSPARFFPSLFHSSCNQS). NAD(+) contacts are provided by Asp-82, Asn-114, Gly-141, Ser-142, Thr-181, Thr-182, Thr-190, Phe-192, Lys-203, and Gly-225. Positions 237, 241, and 306 each coordinate Fe(2+). The NAD(+) site is built by His-310 and His-320. His-320 contacts Fe(2+).

The protein belongs to the iron-containing alcohol dehydrogenase family. Requires Zn(2+) as cofactor.

The protein resides in the mitochondrion matrix. It carries out the reaction a primary alcohol + NAD(+) = an aldehyde + NADH + H(+). The enzyme catalyses a secondary alcohol + NAD(+) = a ketone + NADH + H(+). It catalyses the reaction ethanol + NAD(+) = acetaldehyde + NADH + H(+). Its function is as follows. Involved in ethanol oxidation in mitochondria. This Schizosaccharomyces pombe (strain 972 / ATCC 24843) (Fission yeast) protein is Alcohol dehydrogenase 4 (adh4).